The sequence spans 596 residues: Thioredoxin reductase 1, mitochondrial (596 aa).

Positions 59–87 (LTGQRGSRDSTGATGGNAPAGSGAGAPPP) are disordered. Residues 68 to 79 (STGATGGNAPAG) are compositionally biased toward low complexity. Residues 120–126 (IGGGSAG), 143–147 (LDFVK), 159–170 (GGTCVNVGCIPK), 233–235 (GLG), 262–266 (AVGGR), serine 282, phenylalanine 286, and tyrosine 302 contribute to the FAD site. A disulfide bridge links cysteine 162 with cysteine 167. NADP(+) contacts are provided by residues 322 to 328 (VRSIVLR) and proline 355. Residues 392–399 (RKGLVDDL), 429–432 (VGDI), 438–443 (ELTPVA), and phenylalanine 472 contribute to the FAD site. The Proton acceptor role is filled by histidine 569. Proline 570 serves as a coordination point for FAD. An intrachain disulfide couples cysteine 594 to cysteine 595.

This sequence belongs to the class-I pyridine nucleotide-disulfide oxidoreductase family. Homodimer. FAD serves as cofactor. In terms of tissue distribution, during embryogenesis, expression is seen in germ cell progenitors, developing midgut, hindgut and proventriculus.

Its subcellular location is the mitochondrion. It localises to the cytoplasm. It catalyses the reaction [thioredoxin]-dithiol + NADP(+) = [thioredoxin]-disulfide + NADPH + H(+). Its function is as follows. Thioredoxin system is a major player in glutathione metabolism, due to the demonstrated absence of a glutathione reductase. Functionally interacts with the Sod/Cat reactive oxidation species (ROS) defense system and thereby has a role in preadult development and life span. Lack of a glutathione reductase suggests antioxidant defense in Drosophila, and probably in related insects, differs fundamentally from that in other organisms. The sequence is that of Thioredoxin reductase 1, mitochondrial from Drosophila melanogaster (Fruit fly).